Reading from the N-terminus, the 1185-residue chain is Ubiquitin carboxyl-terminal hydrolase 36 (1185 aa).

Over residues 126–169 (TGKALSSNGHDNTNGVNGSSAATVNGNRKQTVEQSNQNSTTNPN) the composition is skewed to polar residues. Residues 126–174 (TGKALSSNGHDNTNGVNGSSAATVNGNRKQTVEQSNQNSTTNPNELPKP) form a disordered region. Residues 199–509 (AGMLNVGNTC…NAYIMFYELD (311 aa)) enclose the USP domain. Cys-208 (nucleophile) is an active-site residue. The Proton acceptor role is filled by His-468. A phosphoserine mark is found at Ser-552 and Ser-554. Over residues 642-658 (ANSNKSSCNNNTLTTNS) the composition is skewed to low complexity. Disordered stretches follow at residues 642-804 (ANSN…TDAI), 818-975 (HRAT…YQSE), 1056-1122 (APTL…GSFP), and 1136-1185 (NKFK…QQQS). Residues 670–683 (SDEEDEDEDSDDDV) are compositionally biased toward acidic residues. A Phosphothreonine modification is found at Thr-716. Residues Ser-726 and Ser-728 each carry the phosphoserine modification. Low complexity-rich tracts occupy residues 778-797 (KSNG…SNNN) and 836-853 (QQQQ…SLIS). At Ser-867 the chain carries Phosphoserine. At Thr-870 the chain carries Phosphothreonine. Ser-873 is modified (phosphoserine). Positions 891 to 920 (DDNDDDDEDADEEDDADADAEQEEYDDEVV) are enriched in acidic residues. Polar residues-rich tracts occupy residues 924 to 942 (TTPS…SKPS) and 959 to 975 (SAKS…YQSE). Residue Thr-925 is modified to Phosphothreonine. The segment covering 1062 to 1071 (EAREQRKRDA) has biased composition (basic and acidic residues). 2 stretches are compositionally biased toward low complexity: residues 1151-1161 (QQQRALQRHLA) and 1172-1185 (QSTG…QQQS).

It belongs to the peptidase C19 family. Interacts with atms/PAF1, but not with CycT.

The protein resides in the nucleus. The protein localises to the nucleolus. The catalysed reaction is Thiol-dependent hydrolysis of ester, thioester, amide, peptide and isopeptide bonds formed by the C-terminal Gly of ubiquitin (a 76-residue protein attached to proteins as an intracellular targeting signal).. Functionally, required for maintaining multiple types of adult stem cells, including male and female germline, epithelial follicle cell and intestinal stem cells. May function as a transcriptional repressor by continually deubiquiting histone H2B at the promoters of genes critical for cellular differentiation, thereby preventing histone H3 'Lys-4' trimethylation (H3K4). Controls selective autophagy activation by ubiquitinated proteins. In Drosophila mojavensis (Fruit fly), this protein is Ubiquitin carboxyl-terminal hydrolase 36 (Usp36).